The chain runs to 156 residues: Ribonuclease pancreatic (156 aa).

A signal peptide spans 1–28; the sequence is MALEKSLALLPLLVLVLLVLGWVQPSLG. Basic and acidic residues predominate over residues 33-43; the sequence is AQKFQRQHMDS. The disordered stretch occupies residues 33–52; sequence AQKFQRQHMDSDGSPSSNPT. Substrate contacts are provided by K35 and R38. The active-site Proton acceptor is the H40. Cystine bridges form between C54–C112, C68–C123, C86–C138, and C93–C100. N62 is a glycosylation site (N-linked (GlcNAc...) asparagine). Residues 69–73, K94, and R113 each bind substrate; that span reads KPVNT. The N-linked (GlcNAc...) asparagine glycan is linked to N116. The active-site Proton donor is H147.

It belongs to the pancreatic ribonuclease family. In terms of assembly, monomer. Interacts with and forms tight 1:1 complexes with RNH1. Dimerization of two such complexes may occur. Interaction with RNH1 inhibits this protein.

It is found in the secreted. The catalysed reaction is an [RNA] containing cytidine + H2O = an [RNA]-3'-cytidine-3'-phosphate + a 5'-hydroxy-ribonucleotide-3'-[RNA].. It catalyses the reaction an [RNA] containing uridine + H2O = an [RNA]-3'-uridine-3'-phosphate + a 5'-hydroxy-ribonucleotide-3'-[RNA].. Endonuclease that catalyzes the cleavage of RNA on the 3' side of pyrimidine nucleotides. Acts on single-stranded and double-stranded RNA. This chain is Ribonuclease pancreatic (RNASE1), found in Saguinus oedipus (Cotton-top tamarin).